Here is a 277-residue protein sequence, read N- to C-terminus: 2-dehydro-3-deoxyphosphooctonate aldolase (277 aa).

The protein belongs to the KdsA family.

It localises to the cytoplasm. It carries out the reaction D-arabinose 5-phosphate + phosphoenolpyruvate + H2O = 3-deoxy-alpha-D-manno-2-octulosonate-8-phosphate + phosphate. It participates in carbohydrate biosynthesis; 3-deoxy-D-manno-octulosonate biosynthesis; 3-deoxy-D-manno-octulosonate from D-ribulose 5-phosphate: step 2/3. It functions in the pathway bacterial outer membrane biogenesis; lipopolysaccharide biosynthesis. The polypeptide is 2-dehydro-3-deoxyphosphooctonate aldolase (Alkalilimnicola ehrlichii (strain ATCC BAA-1101 / DSM 17681 / MLHE-1)).